A 334-amino-acid polypeptide reads, in one-letter code: Anthranilate phosphoribosyltransferase (334 aa).

5-phospho-alpha-D-ribose 1-diphosphate contacts are provided by residues glycine 81, 84 to 85 (GD), threonine 89, 91 to 94 (NIST), 109 to 117 (KHGSRSVSS), and alanine 121. Anthranilate is bound at residue glycine 81. A Mg(2+)-binding site is contributed by serine 93. Position 167 (arginine 167) interacts with anthranilate. The Mg(2+) site is built by aspartate 225 and glutamate 226.

The protein belongs to the anthranilate phosphoribosyltransferase family. In terms of assembly, homodimer. Mg(2+) is required as a cofactor.

The enzyme catalyses N-(5-phospho-beta-D-ribosyl)anthranilate + diphosphate = 5-phospho-alpha-D-ribose 1-diphosphate + anthranilate. Its pathway is amino-acid biosynthesis; L-tryptophan biosynthesis; L-tryptophan from chorismate: step 2/5. Its function is as follows. Catalyzes the transfer of the phosphoribosyl group of 5-phosphorylribose-1-pyrophosphate (PRPP) to anthranilate to yield N-(5'-phosphoribosyl)-anthranilate (PRA). This chain is Anthranilate phosphoribosyltransferase, found in Actinobacillus pleuropneumoniae serotype 5b (strain L20).